A 270-amino-acid chain; its full sequence is Secreted RxLR effector protein 149 (270 aa).

The N-terminal stretch at 1 to 21 (MRNGVVLFGLFFIGYSSCVLA) is a signal peptide. The short motif at 43 to 58 (RTLQADDPERILAEER) is the RxLR-dEER element.

Belongs to the RxLR effector family.

The protein resides in the secreted. Its subcellular location is the host nucleus. It localises to the host cytoplasm. In terms of biological role, secreted effector that completely suppresses the host cell death induced by cell death-inducing proteins. In Plasmopara viticola (Downy mildew of grapevine), this protein is Secreted RxLR effector protein 149.